We begin with the raw amino-acid sequence, 527 residues long: Type II methyltransferase M.XamI (527 aa).

It belongs to the N(4)/N(6)-methyltransferase family.

The enzyme catalyses a 2'-deoxyadenosine in DNA + S-adenosyl-L-methionine = an N(6)-methyl-2'-deoxyadenosine in DNA + S-adenosyl-L-homocysteine + H(+). Its function is as follows. A gamma subtype methylase that recognizes the double-stranded sequence 5'-GTCGAC-3', possibly methylates A-5 on both strands, and protects the DNA from cleavage by the XamI endonuclease. The protein is Type II methyltransferase M.XamI of Xanthomonas campestris pv. amaranthicola.